A 295-amino-acid chain; its full sequence is Ethanolamine ammonia-lyase small subunit (295 aa).

Residues Val207, Glu228, and Cys258 each contribute to the adenosylcob(III)alamin site.

Belongs to the EutC family. The basic unit is a heterodimer which dimerizes to form tetramers. The heterotetramers trimerize; 6 large subunits form a core ring with 6 small subunits projecting outwards. Requires adenosylcob(III)alamin as cofactor.

Its subcellular location is the bacterial microcompartment. The catalysed reaction is ethanolamine = acetaldehyde + NH4(+). Its pathway is amine and polyamine degradation; ethanolamine degradation. Its function is as follows. Catalyzes the deamination of various vicinal amino-alcohols to oxo compounds. Allows this organism to utilize ethanolamine as the sole source of nitrogen and carbon in the presence of external vitamin B12. In Escherichia coli O81 (strain ED1a), this protein is Ethanolamine ammonia-lyase small subunit.